A 137-amino-acid chain; its full sequence is Small ribosomal subunit protein uS8 (137 aa).

This sequence belongs to the universal ribosomal protein uS8 family. Part of the 30S ribosomal subunit. Contacts proteins S5 and S12.

Functionally, one of the primary rRNA binding proteins, it binds directly to 16S rRNA central domain where it helps coordinate assembly of the platform of the 30S subunit. The chain is Small ribosomal subunit protein uS8 from Metamycoplasma arthritidis (strain 158L3-1) (Mycoplasma arthritidis).